Reading from the N-terminus, the 200-residue chain is Holliday junction resolvase RecU (200 aa).

The tract at residues 1–24 (MTIRYPNGKRYDQASQPHKTPIKK) is disordered. Positions 85, 87, 100, and 119 each coordinate Mg(2+).

The protein belongs to the RecU family. Mg(2+) is required as a cofactor.

The protein resides in the cytoplasm. It catalyses the reaction Endonucleolytic cleavage at a junction such as a reciprocal single-stranded crossover between two homologous DNA duplexes (Holliday junction).. In terms of biological role, endonuclease that resolves Holliday junction intermediates in genetic recombination. Cleaves mobile four-strand junctions by introducing symmetrical nicks in paired strands. Promotes annealing of linear ssDNA with homologous dsDNA. Required for DNA repair, homologous recombination and chromosome segregation. This Bacillus mycoides (strain KBAB4) (Bacillus weihenstephanensis) protein is Holliday junction resolvase RecU.